Here is a 419-residue protein sequence, read N- to C-terminus: Haloacid dehalogenase-like hydrolase domain-containing 5 (419 aa).

An N-terminal signal peptide occupies residues 1–15 (MAALAGLGVLGAGRH).

This sequence belongs to the HAD-like hydrolase superfamily.

This chain is Haloacid dehalogenase-like hydrolase domain-containing 5, found in Mus musculus (Mouse).